The primary structure comprises 377 residues: Chaperone protein DnaJ (377 aa).

Residues 4 to 69 (DYYEALGVTR…QKRAAYDRFG (66 aa)) form the J domain. A CR-type zinc finger spans residues 135 to 213 (GKTAQIRVPT…CHGQGRVTQE (79 aa)). Positions 148, 151, 165, 168, 187, 190, 201, and 204 each coordinate Zn(2+). CXXCXGXG motif repeat units follow at residues 148 to 155 (CDECSGSG), 165 to 172 (CTMCSGSG), 187 to 194 (CPGCNGRG), and 201 to 208 (CEKCHGQG).

Belongs to the DnaJ family. Homodimer. Zn(2+) serves as cofactor.

The protein resides in the cytoplasm. Its function is as follows. Participates actively in the response to hyperosmotic and heat shock by preventing the aggregation of stress-denatured proteins and by disaggregating proteins, also in an autonomous, DnaK-independent fashion. Unfolded proteins bind initially to DnaJ; upon interaction with the DnaJ-bound protein, DnaK hydrolyzes its bound ATP, resulting in the formation of a stable complex. GrpE releases ADP from DnaK; ATP binding to DnaK triggers the release of the substrate protein, thus completing the reaction cycle. Several rounds of ATP-dependent interactions between DnaJ, DnaK and GrpE are required for fully efficient folding. Also involved, together with DnaK and GrpE, in the DNA replication of plasmids through activation of initiation proteins. The sequence is that of Chaperone protein DnaJ from Brucella canis (strain ATCC 23365 / NCTC 10854 / RM-666).